The following is a 740-amino-acid chain: Probable apyrase 7 (740 aa).

Residues Met-1–Ala-113 are Cytoplasmic-facing. A helical transmembrane segment spans residues Val-114–Ile-134. The Extracellular portion of the chain corresponds to Tyr-135 to Lys-581. Asn-137 carries N-linked (GlcNAc...) asparagine glycosylation. ATP is bound at residue Val-147 to Arg-157. The N-linked (GlcNAc...) asparagine glycan is linked to Asn-208. The active-site Proton acceptor is Glu-284. Gly-309–Gln-319 contributes to the ATP binding site. N-linked (GlcNAc...) asparagine glycans are attached at residues Asn-330, Asn-374, Asn-439, and Asn-484. The chain crosses the membrane as a helical span at residues Ile-582–Leu-602. At Ser-603 to Met-740 the chain is on the cytoplasmic side. The interval Phe-706–Met-740 is disordered. Over residues Ser-708–Arg-721 the composition is skewed to low complexity.

Belongs to the GDA1/CD39 NTPase family. Requires Ca(2+) as cofactor. As to expression, detected in mature pollen grains. Also expressed in more diverse tissues such as roots, leaves, stems, pistils and sepals. More particularly expressed in the vascular bundle.

It is found in the membrane. The enzyme catalyses a ribonucleoside 5'-triphosphate + 2 H2O = a ribonucleoside 5'-phosphate + 2 phosphate + 2 H(+). Functionally, catalyzes the hydrolysis of phosphoanhydride bonds of nucleoside tri- and di-phosphates. Involved in the regulation of pollen and anther development. In Arabidopsis thaliana (Mouse-ear cress), this protein is Probable apyrase 7 (APY7).